We begin with the raw amino-acid sequence, 366 residues long: Ferredoxin--NADP reductase, leaf isozyme 2, chloroplastic (366 aa).

The transit peptide at 1 to 48 directs the protein to the chloroplast; the sequence is MAAVNTVSSLPCSKAGAAVAGGAPRPSTCSVFYPPRCWSKRSSGNGVR. Residues 87–209 enclose the FAD-binding FR-type domain; that stretch reads KEPYTGRCLL…TGPVGKEMLM (123 aa). FAD contacts are provided by residues 145–148, 166–168, Tyr-172, and 183–185; these read RLYS, CVK, and VCS. Ser-148 and Lys-168 together coordinate NADP(+). A disulfide bridge links Cys-184 with Cys-189. Ser-185 carries the phosphoserine modification. Thr-216 carries the post-translational modification Phosphothreonine. Thr-224 lines the FAD pocket. Residues Thr-224, 256-257, 286-287, Lys-296, 325-326, and Glu-364 each bind NADP(+); these read VP, SR, and GL.

Belongs to the ferredoxin--NADP reductase type 1 family. In terms of assembly, heterodimer with LFNR1. Component of high molecular weight thylakoid LFNRs-containing protein complexes containing LIR1, LFNR1, LFNR2, TIC62 and TROL proteins. Interacts directly with LFNR1 and LFNR2; LIR1 increases the affinity of LFNR1 and LFNR2 for TIC62 and subsequent thylakoid relocalization. Requires FAD as cofactor. Post-translationally, may form interchain disulfide bonds with LIR1.

The protein localises to the plastid. It localises to the chloroplast stroma. Its subcellular location is the chloroplast thylakoid membrane. It carries out the reaction 2 reduced [2Fe-2S]-[ferredoxin] + NADP(+) + H(+) = 2 oxidized [2Fe-2S]-[ferredoxin] + NADPH. Its pathway is energy metabolism; photosynthesis. Plays a key role in regulating the relative amounts of cyclic and non-cyclic electron flow to meet the demands of the plant for ATP and reducing power. The chain is Ferredoxin--NADP reductase, leaf isozyme 2, chloroplastic from Oryza sativa subsp. indica (Rice).